We begin with the raw amino-acid sequence, 370 residues long: 3-dehydroquinate synthase (370 aa).

Residues 107–111 (GVIGD), 131–132 (TS), lysine 144, and lysine 153 contribute to the NAD(+) site. Zn(2+)-binding residues include glutamate 186, histidine 249, and histidine 267.

Belongs to the sugar phosphate cyclases superfamily. Dehydroquinate synthase family. Requires Co(2+) as cofactor. Zn(2+) is required as a cofactor. The cofactor is NAD(+).

The protein resides in the cytoplasm. The enzyme catalyses 7-phospho-2-dehydro-3-deoxy-D-arabino-heptonate = 3-dehydroquinate + phosphate. Its pathway is metabolic intermediate biosynthesis; chorismate biosynthesis; chorismate from D-erythrose 4-phosphate and phosphoenolpyruvate: step 2/7. Catalyzes the conversion of 3-deoxy-D-arabino-heptulosonate 7-phosphate (DAHP) to dehydroquinate (DHQ). This chain is 3-dehydroquinate synthase, found in Jannaschia sp. (strain CCS1).